We begin with the raw amino-acid sequence, 354 residues long: 3-isopropylmalate dehydrogenase (354 aa).

An NAD(+)-binding site is contributed by 76-87 (GPRWDGAKERPE). The substrate site is built by arginine 94, arginine 104, arginine 130, and aspartate 215. Positions 215, 239, and 243 each coordinate Mg(2+). 273–285 (GSAPDIAGKNKAN) is an NAD(+) binding site.

This sequence belongs to the isocitrate and isopropylmalate dehydrogenases family. LeuB type 1 subfamily. Homodimer. It depends on Mg(2+) as a cofactor. Mn(2+) is required as a cofactor.

The protein resides in the cytoplasm. It carries out the reaction (2R,3S)-3-isopropylmalate + NAD(+) = 4-methyl-2-oxopentanoate + CO2 + NADH. It functions in the pathway amino-acid biosynthesis; L-leucine biosynthesis; L-leucine from 3-methyl-2-oxobutanoate: step 3/4. In terms of biological role, catalyzes the oxidation of 3-carboxy-2-hydroxy-4-methylpentanoate (3-isopropylmalate) to 3-carboxy-4-methyl-2-oxopentanoate. The product decarboxylates to 4-methyl-2 oxopentanoate. The chain is 3-isopropylmalate dehydrogenase from Bacillus anthracis.